The sequence spans 228 residues: Orotidine 5'-phosphate decarboxylase (228 aa).

Residues D8, K30, 59–68, T118, R178, Q187, G207, and R208 contribute to the substrate site; that span reads DLKLHDIPNT. The Proton donor role is filled by K61.

Belongs to the OMP decarboxylase family. Type 1 subfamily. Homodimer.

It catalyses the reaction orotidine 5'-phosphate + H(+) = UMP + CO2. It participates in pyrimidine metabolism; UMP biosynthesis via de novo pathway; UMP from orotate: step 2/2. Its function is as follows. Catalyzes the decarboxylation of orotidine 5'-monophosphate (OMP) to uridine 5'-monophosphate (UMP). This Wolinella succinogenes (strain ATCC 29543 / DSM 1740 / CCUG 13145 / JCM 31913 / LMG 7466 / NCTC 11488 / FDC 602W) (Vibrio succinogenes) protein is Orotidine 5'-phosphate decarboxylase.